The sequence spans 333 residues: Phenylalanine--tRNA ligase alpha subunit (333 aa).

Glu-248 is a binding site for Mg(2+).

It belongs to the class-II aminoacyl-tRNA synthetase family. Phe-tRNA synthetase alpha subunit type 1 subfamily. Tetramer of two alpha and two beta subunits. Mg(2+) is required as a cofactor.

It is found in the cytoplasm. The enzyme catalyses tRNA(Phe) + L-phenylalanine + ATP = L-phenylalanyl-tRNA(Phe) + AMP + diphosphate + H(+). This chain is Phenylalanine--tRNA ligase alpha subunit, found in Ureaplasma urealyticum serovar 10 (strain ATCC 33699 / Western).